The primary structure comprises 185 residues: Ribosome-recycling factor (185 aa).

The protein belongs to the RRF family.

The protein resides in the cytoplasm. Responsible for the release of ribosomes from messenger RNA at the termination of protein biosynthesis. May increase the efficiency of translation by recycling ribosomes from one round of translation to another. This is Ribosome-recycling factor from Campylobacter lari (strain RM2100 / D67 / ATCC BAA-1060).